Here is a 919-residue protein sequence, read N- to C-terminus: Glutamate receptor ionotropic, kainate 3 (919 aa).

The N-terminal stretch at 1–31 (MTAPWRRLRSLVWEYWAGLLVCAFWIPDSRG) is a signal peptide. Topologically, residues 32–563 (MPHVIRIGGI…VFSFLNPLSP (532 aa)) are extracellular. N-linked (GlcNAc...) asparagine glycans are attached at residues Asn-70, Asn-76, Asn-278, Asn-381, Asn-415, Asn-426, and Asn-433. Residues Cys-99 and Cys-350 are joined by a disulfide bond. L-glutamate-binding residues include Pro-518, Thr-520, and Arg-525. 2 N-linked (GlcNAc...) asparagine glycosylation sites follow: Asn-548 and Asn-551. Residues 564-584 (DIWMYVLLAYLGVSCVLFVIA) traverse the membrane as a helical segment. The Cytoplasmic portion of the chain corresponds to 585 to 636 (RFSPYEWYDAHPCNPGSEVVENNFTLLNSFWFGMGSLMQQGSELMPKALSTR). A helical transmembrane segment spans residues 637–657 (IIGGIWWFFTLIIISSYTANL). Residues 658–820 (AAFLTVERME…KEASALGIQK (163 aa)) lie on the Extracellular side of the membrane. The L-glutamate site is built by Ala-691, Thr-692, and Glu-739. A glycan (N-linked (GlcNAc...) asparagine) is linked at Asn-752. The helical transmembrane segment at 821–841 (IGGIFIVLAAGLVLSVLVAVG) threads the bilayer. Topologically, residues 842–919 (EFVYKLRKTA…CSTSLAPVFP (78 aa)) are cytoplasmic. Ser-869 is modified (phosphoserine). A Glycyl lysine isopeptide (Lys-Gly) (interchain with G-Cter in SUMO1) cross-link involves residue Lys-887.

This sequence belongs to the glutamate-gated ion channel (TC 1.A.10.1) family. GRIK3 subfamily. Homotetramer, and heterotetramer with either GRIK4 or GRIK5. Can form functional heteromeric receptors with GRIK2. Interacts with PRKCABP. Interacts with NETO2.

It is found in the cell membrane. The protein resides in the postsynaptic cell membrane. The enzyme catalyses Ca(2+)(in) = Ca(2+)(out). Its function is as follows. Ionotropic glutamate receptor that functions as a cation-permeable ligand-gated ion channel, gated by L-glutamate and the glutamatergic agonist kainic acid. Binding of the excitatory neurotransmitter L-glutamate induces a conformation change, leading to the opening of the cation channel, and thereby converts the chemical signal to an electrical impulse. The receptor then desensitizes rapidly and enters a transient inactive state, characterized by the presence of bound agonist. In association with GRIK2, involved in presynaptic facilitation of glutamate release at hippocampal mossy fiber synapses. This chain is Glutamate receptor ionotropic, kainate 3 (GRIK3), found in Homo sapiens (Human).